The primary structure comprises 96 residues: Aspartyl/glutamyl-tRNA(Asn/Gln) amidotransferase subunit C (96 aa).

Belongs to the GatC family. In terms of assembly, heterotrimer of A, B and C subunits.

It catalyses the reaction L-glutamyl-tRNA(Gln) + L-glutamine + ATP + H2O = L-glutaminyl-tRNA(Gln) + L-glutamate + ADP + phosphate + H(+). The enzyme catalyses L-aspartyl-tRNA(Asn) + L-glutamine + ATP + H2O = L-asparaginyl-tRNA(Asn) + L-glutamate + ADP + phosphate + 2 H(+). Functionally, allows the formation of correctly charged Asn-tRNA(Asn) or Gln-tRNA(Gln) through the transamidation of misacylated Asp-tRNA(Asn) or Glu-tRNA(Gln) in organisms which lack either or both of asparaginyl-tRNA or glutaminyl-tRNA synthetases. The reaction takes place in the presence of glutamine and ATP through an activated phospho-Asp-tRNA(Asn) or phospho-Glu-tRNA(Gln). This Bacillus velezensis (strain DSM 23117 / BGSC 10A6 / LMG 26770 / FZB42) (Bacillus amyloliquefaciens subsp. plantarum) protein is Aspartyl/glutamyl-tRNA(Asn/Gln) amidotransferase subunit C.